The sequence spans 93 residues: Large ribosomal subunit protein bL27 (93 aa).

Belongs to the bacterial ribosomal protein bL27 family.

The protein is Large ribosomal subunit protein bL27 of Trichormus variabilis (strain ATCC 29413 / PCC 7937) (Anabaena variabilis).